The sequence spans 525 residues: GMP synthase [glutamine-hydrolyzing] (525 aa).

In terms of domain architecture, Glutamine amidotransferase type-1 spans 9-207; that stretch reads RILILDFGSQ…ILDICECEAL (199 aa). The active-site Nucleophile is the cysteine 86. Active-site residues include histidine 181 and glutamate 183. One can recognise a GMPS ATP-PPase domain in the interval 208–400; sequence WTPSKIAEDA…LGLPYDMVYR (193 aa). 235 to 241 is an ATP binding site; the sequence is SGGVDSS.

As to quaternary structure, homodimer.

It carries out the reaction XMP + L-glutamine + ATP + H2O = GMP + L-glutamate + AMP + diphosphate + 2 H(+). It functions in the pathway purine metabolism; GMP biosynthesis; GMP from XMP (L-Gln route): step 1/1. Its function is as follows. Catalyzes the synthesis of GMP from XMP. The chain is GMP synthase [glutamine-hydrolyzing] from Pseudomonas fluorescens (strain SBW25).